Consider the following 958-residue polypeptide: Structure-specific endonuclease subunit SLX4 (958 aa).

Disordered regions lie at residues 89–123 (AESP…KGKT), 183–209 (QKKA…GPID), 326–400 (LATA…LSPT), 531–589 (DLTI…EQHQ), 594–613 (QSNT…SFEL), and 655–849 (STAA…SPPA). The segment covering 109 to 121 (KKPRTAGARKKKG) has biased composition (basic residues). Positions 332 to 341 (RRPEEAERST) are enriched in basic and acidic residues. The span at 342 to 351 (LSRQQDTHIP) shows a compositional bias: polar residues. The span at 364–373 (AASKSASAKP) shows a compositional bias: low complexity. Residues 374 to 389 (KAAKKAPKPRATKKKQ) show a composition bias toward basic residues. Residues 600–610 (QPQPAPPPPPS) show a composition bias toward pro residues. Low complexity-rich tracts occupy residues 655-666 (STAAQAAMSTSA), 775-787 (TTSP…RAKA), and 821-838 (PDSG…SSPD).

This sequence belongs to the SLX4 family. Forms a heterodimer with SLX1. Post-translationally, phosphorylated in response to DNA damage.

It is found in the nucleus. Functionally, regulatory subunit of the SLX1-SLX4 structure-specific endonuclease that resolves DNA secondary structures generated during DNA repair and recombination. Has endonuclease activity towards branched DNA substrates, introducing single-strand cuts in duplex DNA close to junctions with ss-DNA. The chain is Structure-specific endonuclease subunit SLX4 from Chaetomium globosum (strain ATCC 6205 / CBS 148.51 / DSM 1962 / NBRC 6347 / NRRL 1970) (Soil fungus).